The following is a 240-amino-acid chain: Large ribosomal subunit protein bL25 (240 aa).

Disordered stretches follow at residues 1 to 21 (MAEN…PARR) and 204 to 240 (GAAP…KAKK). The segment covering 204-229 (GAAPAAGAAAPAGGAAPAAGAAPAKG) has biased composition (low complexity). Positions 230–240 (GEAKGGDKAKK) are enriched in basic and acidic residues.

This sequence belongs to the bacterial ribosomal protein bL25 family. CTC subfamily. Part of the 50S ribosomal subunit; part of the 5S rRNA/L5/L18/L25 subcomplex. Contacts the 5S rRNA. Binds to the 5S rRNA independently of L5 and L18.

This is one of the proteins that binds to the 5S RNA in the ribosome where it forms part of the central protuberance. This chain is Large ribosomal subunit protein bL25, found in Anaeromyxobacter dehalogenans (strain 2CP-1 / ATCC BAA-258).